Reading from the N-terminus, the 662-residue chain is UvrABC system protein B (662 aa).

Positions 25-411 (DGIIAGDKFQ…STRIVEQVIR (387 aa)) constitute a Helicase ATP-binding domain. 38 to 45 (GVTGSGKT) is an ATP binding site. Residues 91-114 (YYDYYQPEAYVPARDLYIEKDASI) carry the Beta-hairpin motif. The region spanning 428–594 (QMEHIYGEVK…TIKKAIEDIL (167 aa)) is the Helicase C-terminal domain. The UVR domain occupies 625-660 (KKLIKKLEAQMAEYADMLMFEEAAVIRDKIEEVKRI).

The protein belongs to the UvrB family. In terms of assembly, forms a heterotetramer with UvrA during the search for lesions. Interacts with UvrC in an incision complex.

The protein localises to the cytoplasm. Its function is as follows. The UvrABC repair system catalyzes the recognition and processing of DNA lesions. A damage recognition complex composed of 2 UvrA and 2 UvrB subunits scans DNA for abnormalities. Upon binding of the UvrA(2)B(2) complex to a putative damaged site, the DNA wraps around one UvrB monomer. DNA wrap is dependent on ATP binding by UvrB and probably causes local melting of the DNA helix, facilitating insertion of UvrB beta-hairpin between the DNA strands. Then UvrB probes one DNA strand for the presence of a lesion. If a lesion is found the UvrA subunits dissociate and the UvrB-DNA preincision complex is formed. This complex is subsequently bound by UvrC and the second UvrB is released. If no lesion is found, the DNA wraps around the other UvrB subunit that will check the other stand for damage. This is UvrABC system protein B from Treponema denticola (strain ATCC 35405 / DSM 14222 / CIP 103919 / JCM 8153 / KCTC 15104).